We begin with the raw amino-acid sequence, 176 residues long: MNSDIVEVATIGRCVGLKGYLKLHNKSDFPEQFKKGATFFDKNDDQLIIKDYNRQKELVLFEKFDDLDLAKTLVNKTIYTTKELTRKNCKLKKDEFFQFDIIGLKVVENGEILGIVEDIQDNFANSLLYIKTDEVLIAAGKPKNFYIPYLERFIESVNLDSGEILVKGARDILENS.

Residues 93-172 form the PRC barrel domain; it reads KDEFFQFDII…EILVKGARDI (80 aa).

Belongs to the RimM family. In terms of assembly, binds ribosomal protein uS19.

It is found in the cytoplasm. In terms of biological role, an accessory protein needed during the final step in the assembly of 30S ribosomal subunit, possibly for assembly of the head region. Essential for efficient processing of 16S rRNA. May be needed both before and after RbfA during the maturation of 16S rRNA. It has affinity for free ribosomal 30S subunits but not for 70S ribosomes. In Campylobacter concisus (strain 13826), this protein is Ribosome maturation factor RimM.